Here is a 163-residue protein sequence, read N- to C-terminus: Putative 4-hydroxy-4-methyl-2-oxoglutarate aldolase (163 aa).

Substrate contacts are provided by residues 76-79 (GDMI) and R98. Residue D99 participates in a divalent metal cation binding.

This sequence belongs to the class II aldolase/RraA-like family. In terms of assembly, homotrimer. The cofactor is a divalent metal cation.

It carries out the reaction 4-hydroxy-4-methyl-2-oxoglutarate = 2 pyruvate. The enzyme catalyses oxaloacetate + H(+) = pyruvate + CO2. Functionally, catalyzes the aldol cleavage of 4-hydroxy-4-methyl-2-oxoglutarate (HMG) into 2 molecules of pyruvate. Also contains a secondary oxaloacetate (OAA) decarboxylase activity due to the common pyruvate enolate transition state formed following C-C bond cleavage in the retro-aldol and decarboxylation reactions. The polypeptide is Putative 4-hydroxy-4-methyl-2-oxoglutarate aldolase (Pseudomonas fluorescens (strain Pf0-1)).